The chain runs to 532 residues: Probable alpha-galactosidase A (532 aa).

The first 21 residues, 1-21 (MDTTKSLLSTLIAIMIPLSLG), serve as a signal peptide directing secretion. Residues Cys44 and Cys76 are joined by a disulfide bond. Asn47, Asn91, and Asn121 each carry an N-linked (GlcNAc...) asparagine glycan. Cys124 and Cys154 form a disulfide bridge. Asp152 functions as the Nucleophile in the catalytic mechanism. The N-linked (GlcNAc...) asparagine glycan is linked to Asn201. The active-site Proton donor is the Asp210. The region spanning 410–531 (CSTVIPTGIV…GLPSGVDIKP (122 aa)) is the Ricin B-type lectin domain. Cystine bridges form between Cys427-Cys441 and Cys466-Cys478.

This sequence belongs to the glycosyl hydrolase 27 family.

Its subcellular location is the secreted. It carries out the reaction Hydrolysis of terminal, non-reducing alpha-D-galactose residues in alpha-D-galactosides, including galactose oligosaccharides, galactomannans and galactolipids.. Hydrolyzes a variety of simple alpha-D-galactoside as well as more complex molecules such as oligosaccharides and polysaccharides. The protein is Probable alpha-galactosidase A (aglA) of Aspergillus fumigatus (strain ATCC MYA-4609 / CBS 101355 / FGSC A1100 / Af293) (Neosartorya fumigata).